The chain runs to 113 residues: Large ribosomal subunit protein uL22 (113 aa).

Belongs to the universal ribosomal protein uL22 family. As to quaternary structure, part of the 50S ribosomal subunit.

Its function is as follows. This protein binds specifically to 23S rRNA; its binding is stimulated by other ribosomal proteins, e.g. L4, L17, and L20. It is important during the early stages of 50S assembly. It makes multiple contacts with different domains of the 23S rRNA in the assembled 50S subunit and ribosome. In terms of biological role, the globular domain of the protein is located near the polypeptide exit tunnel on the outside of the subunit, while an extended beta-hairpin is found that lines the wall of the exit tunnel in the center of the 70S ribosome. This chain is Large ribosomal subunit protein uL22, found in Thermus thermophilus (strain ATCC BAA-163 / DSM 7039 / HB27).